A 267-amino-acid chain; its full sequence is Putative F-box protein At1g61060 (267 aa).

The F-box domain maps to 15-63 (DYFDAIHVDLFTAKILSKLPVKSIAQCRCVSKLWSSQIRRPYYNMLFPI).

The chain is Putative F-box protein At1g61060 from Arabidopsis thaliana (Mouse-ear cress).